An 863-amino-acid chain; its full sequence is DNA ligase (863 aa).

NAD(+) contacts are provided by residues 76 to 80, 125 to 126, and Glu159; these read DAAYD and SL. Residue Lys161 is the N6-AMP-lysine intermediate of the active site. NAD(+) is bound by residues Arg182 and Glu221. Residues 237–256 are disordered; the sequence is EDAGRPPFANPRNAAAGSLR. Residues 241–253 are compositionally biased toward low complexity; the sequence is RPPFANPRNAAAG. Residues Lys346 and Lys370 each contribute to the NAD(+) site. Cys467, Cys470, Cys486, and Cys492 together coordinate Zn(2+). In terms of domain architecture, BRCT spans 781–863; sequence GLPQTLEGKS…DTLLATGDVQ (83 aa).

Belongs to the NAD-dependent DNA ligase family. LigA subfamily. The cofactor is Mg(2+). Mn(2+) is required as a cofactor.

The catalysed reaction is NAD(+) + (deoxyribonucleotide)n-3'-hydroxyl + 5'-phospho-(deoxyribonucleotide)m = (deoxyribonucleotide)n+m + AMP + beta-nicotinamide D-nucleotide.. In terms of biological role, DNA ligase that catalyzes the formation of phosphodiester linkages between 5'-phosphoryl and 3'-hydroxyl groups in double-stranded DNA using NAD as a coenzyme and as the energy source for the reaction. It is essential for DNA replication and repair of damaged DNA. The chain is DNA ligase from Bifidobacterium animalis subsp. lactis (strain AD011).